We begin with the raw amino-acid sequence, 486 residues long: ATP synthase subunit beta (486 aa).

164–171 (GGAGVGKT) is a binding site for ATP.

Belongs to the ATPase alpha/beta chains family. F-type ATPases have 2 components, CF(1) - the catalytic core - and CF(0) - the membrane proton channel. CF(1) has five subunits: alpha(3), beta(3), gamma(1), delta(1), epsilon(1). CF(0) has four main subunits: a(1), b(1), b'(1) and c(9-12).

It localises to the cellular thylakoid membrane. It carries out the reaction ATP + H2O + 4 H(+)(in) = ADP + phosphate + 5 H(+)(out). Its function is as follows. Produces ATP from ADP in the presence of a proton gradient across the membrane. The catalytic sites are hosted primarily by the beta subunits. The polypeptide is ATP synthase subunit beta (Prochlorococcus marinus (strain AS9601)).